The sequence spans 410 residues: Elongation factor Tu, chloroplastic (410 aa).

The 205-residue stretch at 10–214 (KPHVNIGTIG…NVDEYIPTPE (205 aa)) folds into the tr-type G domain. Positions 19-26 (GHVDHGKT) are G1. 19-26 (GHVDHGKT) provides a ligand contact to GTP. Threonine 26 lines the Mg(2+) pocket. The segment at 60-64 (GITIN) is G2. Positions 81 to 84 (DCPG) are G3. Residues 81-85 (DCPGH) and 136-139 (NKED) contribute to the GTP site. Positions 136-139 (NKED) are G4. Residues 174–176 (SAL) form a G5 region.

It belongs to the TRAFAC class translation factor GTPase superfamily. Classic translation factor GTPase family. EF-Tu/EF-1A subfamily.

Its subcellular location is the plastid. The protein localises to the chloroplast stroma. It catalyses the reaction GTP + H2O = GDP + phosphate + H(+). Its function is as follows. GTP hydrolase that promotes the GTP-dependent binding of aminoacyl-tRNA to the A-site of ribosomes during protein biosynthesis. In Bigelowiella natans (Pedinomonas minutissima), this protein is Elongation factor Tu, chloroplastic (tufA).